Here is a 272-residue protein sequence, read N- to C-terminus: Proteasome subunit beta type-5 (272 aa).

Positions 1–62 (MINIDFDNIE…APKALEFAHG (62 aa)) are cleaved as a propeptide — removed in mature form. The Nucleophile role is filled by threonine 63.

This sequence belongs to the peptidase T1B family. In terms of assembly, the 26S proteasome consists of a 20S proteasome core and two 19S regulatory subunits. The 20S proteasome core is composed of 28 subunits that are arranged in four stacked rings, resulting in a barrel-shaped structure. The two end rings are each formed by seven alpha subunits, and the two central rings are each formed by seven beta subunits. The catalytic chamber with the active sites is on the inside of the barrel.

Its subcellular location is the cytoplasm. The protein resides in the nucleus. The enzyme catalyses Cleavage of peptide bonds with very broad specificity.. In terms of biological role, the proteasome is a multicatalytic proteinase complex which is characterized by its ability to cleave peptides with Arg, Phe, Tyr, Leu, and Glu adjacent to the leaving group at neutral or slightly basic pH. The proteasome has an ATP-dependent proteolytic activity. The sequence is that of Proteasome subunit beta type-5 (psmB5) from Dictyostelium discoideum (Social amoeba).